Reading from the N-terminus, the 547-residue chain is ATP synthase subunit alpha (547 aa).

ATP is bound at residue Gly-172–Thr-179.

Belongs to the ATPase alpha/beta chains family. F-type ATPases have 2 components, CF(1) - the catalytic core - and CF(0) - the membrane proton channel. CF(1) has five subunits: alpha(3), beta(3), gamma(1), delta(1), epsilon(1). CF(0) has three main subunits: a(1), b(2) and c(9-12). The alpha and beta chains form an alternating ring which encloses part of the gamma chain. CF(1) is attached to CF(0) by a central stalk formed by the gamma and epsilon chains, while a peripheral stalk is formed by the delta and b chains.

The protein resides in the cell membrane. It catalyses the reaction ATP + H2O + 4 H(+)(in) = ADP + phosphate + 5 H(+)(out). Its function is as follows. Produces ATP from ADP in the presence of a proton gradient across the membrane. The alpha chain is a regulatory subunit. The polypeptide is ATP synthase subunit alpha (Rhodococcus opacus (strain B4)).